The primary structure comprises 246 residues: Large ribosomal subunit protein uL3 (246 aa).

Disordered regions lie at residues 140-162 (SHRS…NKKM) and 215-246 (DVPL…EENA). N5-methylglutamine is present on glutamine 151. Positions 234–246 (EAAPEAPASEENA) are enriched in low complexity.

The protein belongs to the universal ribosomal protein uL3 family. In terms of assembly, part of the 50S ribosomal subunit. Forms a cluster with proteins L14 and L19. In terms of processing, methylated by PrmB.

One of the primary rRNA binding proteins, it binds directly near the 3'-end of the 23S rRNA, where it nucleates assembly of the 50S subunit. This is Large ribosomal subunit protein uL3 from Methylorubrum populi (strain ATCC BAA-705 / NCIMB 13946 / BJ001) (Methylobacterium populi).